The sequence spans 396 residues: Peptide chain release factor 1, mitochondrial (396 aa).

The residue at position 268 (Q268) is an N5-methylglutamine. The tract at residues 317 to 340 (LEKEEKERNARKDQVSTTDRSDKI) is disordered.

Belongs to the prokaryotic/mitochondrial release factor family. In terms of processing, methylation of glutamine in the GGQ triplet is conserved from bacteria to mammals.

It localises to the mitochondrion. Its function is as follows. Mitochondrial peptide chain release factor that directs the termination of translation in response to the peptide chain termination codons UAA and UAG. This is Peptide chain release factor 1, mitochondrial (MRF1) from Kluyveromyces lactis (strain ATCC 8585 / CBS 2359 / DSM 70799 / NBRC 1267 / NRRL Y-1140 / WM37) (Yeast).